A 212-amino-acid chain; its full sequence is MNIFRFLGDISHLSAILILLLKIWKSRSCAGISGKSQLLFAIVFTTRYLDLFTNFISLYNTSMKMVYVASSYATIWMIYSKFKATYDGNHDTFRVEFLIVPTAILAFLVNHDFTPLEILWTFSIYLESVAILPQLFMVSKTGEAETITSHYLFALGIYRALYLFNWIWRYQFEGFFDLIAIVAGLVQTVLYCDFFYLYITKVLKGKKLSLPA.

Over 1-4 (MNIF) the chain is Lumenal. Residues 5–24 (RFLGDISHLSAILILLLKIW) form a helical membrane-spanning segment. Over 25–32 (KSRSCAGI) the chain is Cytoplasmic. The helical transmembrane segment at 33-52 (SGKSQLLFAIVFTTRYLDLF) threads the bilayer. The segment at 47–48 (RY) is interaction with the K-D-E-L motif on target proteins. The Lumenal portion of the chain corresponds to 53–58 (TNFISL). A helical membrane pass occupies residues 59–79 (YNTSMKMVYVASSYATIWMIY). At 80 to 92 (SKFKATYDGNHDT) the chain is on the cytoplasmic side. A helical membrane pass occupies residues 93 to 110 (FRVEFLIVPTAILAFLVN). The Lumenal segment spans residues 111-116 (HDFTPL). A helical transmembrane segment spans residues 117–135 (EILWTFSIYLESVAILPQL). Residues 136–149 (FMVSKTGEAETITS) are Cytoplasmic-facing. The chain crosses the membrane as a helical span at residues 150-168 (HYLFALGIYRALYLFNWIW). An interaction with the K-D-E-L motif on target proteins region spans residues 159 to 169 (RALYLFNWIWR). Topologically, residues 169 to 178 (RYQFEGFFDL) are lumenal. The chain crosses the membrane as a helical span at residues 179–199 (IAIVAGLVQTVLYCDFFYLYI). The Cytoplasmic portion of the chain corresponds to 200–212 (TKVLKGKKLSLPA). The segment at 204–207 (KGKK) is important for recycling of cargo proteins with the sequence motif K-D-E-L from the Golgi to the endoplasmic reticulum.

The protein belongs to the ERD2 family.

It localises to the golgi apparatus membrane. The protein resides in the cytoplasmic vesicle. It is found in the COPI-coated vesicle membrane. The protein localises to the endoplasmic reticulum membrane. Its subcellular location is the endoplasmic reticulum-Golgi intermediate compartment membrane. Functionally, receptor for the C-terminal sequence motif K-D-E-L that is present on endoplasmic reticulum resident proteins and that mediates their recycling from the Golgi back to the endoplasmic reticulum. In Xenopus tropicalis (Western clawed frog), this protein is ER lumen protein-retaining receptor 1 (kdelr1).